A 447-amino-acid polypeptide reads, in one-letter code: Chordin-like protein 1 (447 aa).

Positions 1–22 are cleaved as a signal peptide; that stretch reads MDGMKYIISLFFIFVFLEGSKT. VWFC domains lie at 30 to 95 and 108 to 174; these read TYCV…PRCP and KSCE…RVCR. N-linked (GlcNAc...) asparagine glycosylation occurs at N113. The short motif at 174-176 is the Cell attachment site element; that stretch reads RGD. Residues 200-224 are disordered; it reads SYLRSPYDPPPNRQAGGLPRFPGSR. The VWFC 3 domain occupies 253–318; it reads QVCVSNGKTY…IDGKCCKVCP (66 aa). The N-linked (GlcNAc...) asparagine glycan is linked to N286.

Post-translationally, may be glycosylated. Expressed in heart, brain, lung, liver, kidney and testis.

Its subcellular location is the secreted. Its function is as follows. Seems to antagonize the function of BMP4 by binding to it and preventing its interaction with receptors. Alters the fate commitment of neural stem cells from gliogenesis to neurogenesis. Contributes to neuronal differentiation of neural stem cells in the brain by preventing the adoption of a glial fate. May play a crucial role in dorsoventral axis formation. Antagonizes the function of BMP7 and may thus play an important role in the embryonic bone formation. Shows no inhibitory effect on the inducing activity of BMP2. Plays a role during anterior segment eye development. This Mus musculus (Mouse) protein is Chordin-like protein 1 (Chrdl1).